The following is a 94-amino-acid chain: Aspartyl/glutamyl-tRNA(Asn/Gln) amidotransferase subunit C (94 aa).

The protein belongs to the GatC family. Heterotrimer of A, B and C subunits.

It carries out the reaction L-glutamyl-tRNA(Gln) + L-glutamine + ATP + H2O = L-glutaminyl-tRNA(Gln) + L-glutamate + ADP + phosphate + H(+). The catalysed reaction is L-aspartyl-tRNA(Asn) + L-glutamine + ATP + H2O = L-asparaginyl-tRNA(Asn) + L-glutamate + ADP + phosphate + 2 H(+). Allows the formation of correctly charged Asn-tRNA(Asn) or Gln-tRNA(Gln) through the transamidation of misacylated Asp-tRNA(Asn) or Glu-tRNA(Gln) in organisms which lack either or both of asparaginyl-tRNA or glutaminyl-tRNA synthetases. The reaction takes place in the presence of glutamine and ATP through an activated phospho-Asp-tRNA(Asn) or phospho-Glu-tRNA(Gln). The sequence is that of Aspartyl/glutamyl-tRNA(Asn/Gln) amidotransferase subunit C from Desulfitobacterium hafniense (strain DSM 10664 / DCB-2).